The sequence spans 350 residues: Protein-glutamate methylesterase/protein-glutamine glutaminase (350 aa).

The 118-residue stretch at 5 to 122 folds into the Response regulatory domain; sequence KVLCVDDSAL…RDGLIEYSEV (118 aa). A 4-aspartylphosphate modification is found at Asp-56. The CheB-type methylesterase domain maps to 152 to 346; the sequence is PFASSEKLVI…ERILTRLGDR (195 aa). Active-site residues include Ser-165, His-191, and Asp-288.

It belongs to the CheB family. Phosphorylated by CheA. Phosphorylation of the N-terminal regulatory domain activates the methylesterase activity.

Its subcellular location is the cytoplasm. The enzyme catalyses [protein]-L-glutamate 5-O-methyl ester + H2O = L-glutamyl-[protein] + methanol + H(+). It catalyses the reaction L-glutaminyl-[protein] + H2O = L-glutamyl-[protein] + NH4(+). Involved in chemotaxis. Part of a chemotaxis signal transduction system that modulates chemotaxis in response to various stimuli. Catalyzes the demethylation of specific methylglutamate residues introduced into the chemoreceptors (methyl-accepting chemotaxis proteins or MCP) by CheR. Also mediates the irreversible deamidation of specific glutamine residues to glutamic acid. The polypeptide is Protein-glutamate methylesterase/protein-glutamine glutaminase (Bordetella pertussis (strain Tohama I / ATCC BAA-589 / NCTC 13251)).